The following is a 217-amino-acid chain: Superoxide dismutase [Cu-Zn], chloroplastic (217 aa).

The transit peptide at 1–63 (MAAHSIFTTT…TTPKPLTVFA (63 aa)) directs the protein to the chloroplast. 3 residues coordinate Cu cation: H109, H111, and H126. A disulfide bridge links C120 with C209. Residues H126, H134, H143, and D146 each contribute to the Zn(2+) site. H183 is a binding site for Cu cation.

It belongs to the Cu-Zn superoxide dismutase family. Homotetramer. The cofactor is Cu cation. Zn(2+) serves as cofactor.

The protein localises to the plastid. Its subcellular location is the chloroplast. The catalysed reaction is 2 superoxide + 2 H(+) = H2O2 + O2. In terms of biological role, destroys radicals which are normally produced within the cells and which are toxic to biological systems. The polypeptide is Superoxide dismutase [Cu-Zn], chloroplastic (SODCP.2) (Solanum lycopersicum (Tomato)).